A 64-amino-acid chain; its full sequence is Large ribosomal subunit protein bL35 (64 aa).

Belongs to the bacterial ribosomal protein bL35 family.

The protein is Large ribosomal subunit protein bL35 of Acidothermus cellulolyticus (strain ATCC 43068 / DSM 8971 / 11B).